The sequence spans 2615 residues: Probable serine/threonine-protein kinase roco7 (2615 aa).

Residues Met1 to Ser13 are compositionally biased toward low complexity. Disordered stretches follow at residues Met1 to Gln35, Ser275 to Asn297, Gln533 to Asn623, and Ser946 to Gln998. Composition is skewed to low complexity over residues Gln533–Ser560, Asn567–Asn614, and Ser946–Ser996. Residues Ser1441–Leu1631 enclose the COR domain. Residues Leu1775–Phe2042 form the Protein kinase domain. Residues Leu1781–Val1789 and Lys1802 contribute to the ATP site. The Proton acceptor role is filled by Asp1899. Disordered regions lie at residues Gln2061–Gly2158 and Gly2176–Gly2209. Composition is skewed to low complexity over residues Ser2073–Gly2158 and Asn2182–Gly2209. 2 WD repeats span residues Gly2491 to Asp2527 and Arg2533 to Ser2574.

The protein belongs to the protein kinase superfamily. TKL Ser/Thr protein kinase family. ROCO subfamily.

The enzyme catalyses L-seryl-[protein] + ATP = O-phospho-L-seryl-[protein] + ADP + H(+). The catalysed reaction is L-threonyl-[protein] + ATP = O-phospho-L-threonyl-[protein] + ADP + H(+). This Dictyostelium discoideum (Social amoeba) protein is Probable serine/threonine-protein kinase roco7 (roco7).